Reading from the N-terminus, the 324-residue chain is Alkanal monooxygenase beta chain (324 aa).

It belongs to the bacterial luciferase oxidoreductase family. Heterodimer of an alpha and a beta chain.

It catalyses the reaction a long-chain fatty aldehyde + FMNH2 + O2 = a long-chain fatty acid + hnu + FMN + H2O + 2 H(+). Its function is as follows. Light-emitting reaction in luminous bacteria. The specific role of the beta subunit is unknown, but it is absolutely required for bioluminescence activity. This is Alkanal monooxygenase beta chain (luxB) from Photorhabdus luminescens (Xenorhabdus luminescens).